The chain runs to 686 residues: Zinc finger protein 7 (686 aa).

Positions Val4–Ala76 constitute a KRAB domain. Glycyl lysine isopeptide (Lys-Gly) (interchain with G-Cter in SUMO2) cross-links involve residues Lys81 and Lys101. Phosphoserine is present on residues Ser126 and Ser138. 6 consecutive C2H2-type zinc fingers follow at residues Ser223–His245, Tyr250–His272, Phe278–His300, Tyr306–His328, Tyr334–His356, and Tyr362–His384. Residues Lys279 and Lys292 each participate in a glycyl lysine isopeptide (Lys-Gly) (interchain with G-Cter in SUMO2) cross-link. Residue Lys393 forms a Glycyl lysine isopeptide (Lys-Gly) (interchain with G-Cter in SUMO2) linkage. 9 C2H2-type zinc fingers span residues Phe413–His435, Tyr441–His463, Phe469–His491, Tyr497–His519, Tyr525–His547, Tyr553–His575, Tyr581–His603, His634–His656, and Tyr662–His684.

This sequence belongs to the krueppel C2H2-type zinc-finger protein family.

The protein localises to the nucleus. May be involved in transcriptional regulation. The sequence is that of Zinc finger protein 7 (ZNF7) from Pongo abelii (Sumatran orangutan).